Consider the following 168-residue polypeptide: uncharacterized protein (168 aa).

A run of 5 helical transmembrane segments spans residues 15 to 33 (YLTVIIYRTGFVIAALAVL), 41 to 57 (LSLTFILIAATCCASSL), 73 to 93 (WIGLLFYINHYPALALGGALL), 108 to 128 (VPLLNLQPIFVACLWFSWVLN), and 129 to 149 (NLIALRIFSIISGVLLLVLAI).

It localises to the cell membrane. This is an uncharacterized protein from Haemophilus influenzae (strain ATCC 51907 / DSM 11121 / KW20 / Rd).